A 509-amino-acid polypeptide reads, in one-letter code: Transmembrane protein 180 (509 aa).

Residues 1–10 lie on the Extracellular side of the membrane; sequence MGLRLLACLF. Residues 11–42 form a helical membrane-spanning segment; it reads HLPTAVIYGSLSLFVSILHNVFLLYYVDTFVS. The Cytoplasmic portion of the chain corresponds to 43-54; the sequence is VYKIDKLSFWIG. Residues 55-73 form a helical membrane-spanning segment; it reads ETVFLIWNSLNDPLFGWLS. Residues 74–98 are Extracellular-facing; the sequence is DRVFLSTQQPGAEISSPEVVLKRLR. The helical transmembrane segment at 99-116 threads the bilayer; it reads ALSHNGPLFAISFLAFWV. Topologically, residues 117–124 are cytoplasmic; that stretch reads AWAHPGLQ. Residues 125 to 149 traverse the membrane as a helical segment; that stretch reads FLLCLCMYDSFLTMVDLHHNALLAD. Over 150 to 153 the chain is Extracellular; it reads LAVS. Residues 154–177 traverse the membrane as a helical segment; the sequence is AKDRTSLNFYCSFFSAIGSLSVFM. Topologically, residues 178–189 are cytoplasmic; that stretch reads SYAVWNKEDFFS. Residues 190–221 traverse the membrane as a helical segment; it reads FRIFCIVLAFCSIVGFTLSTQLLRQRFETDGK. At 222–259 the chain is on the extracellular side; the sequence is AKWDQESTLKELYIEKLSVPQEKRITLVEYLQQLSRHR. The chain crosses the membrane as a helical span at residues 260–287; it reads NFLWFVCMNLIQVFHCHFNSNFFPLFLE. Topologically, residues 288–300 are cytoplasmic; sequence HLLSDKISVSTGS. A helical membrane pass occupies residues 301 to 320; the sequence is FLLGISYIAPHLNNLYFLSL. The Extracellular portion of the chain corresponds to 321–325; sequence CRRWG. Residues 326-345 traverse the membrane as a helical segment; that stretch reads VYAVVRGLFFLKLALSVVML. Topologically, residues 346–353 are cytoplasmic; sequence LAGPDQVY. Residues 354-388 traverse the membrane as a helical segment; sequence LLCIFIASNRVFTEGTCKLLNLVVTDLVDEDLVLN. The Extracellular segment spans residues 389–397; it reads RRKQAASAL. A helical transmembrane segment spans residues 398–424; it reads LFGMVALVTKPGQTFAPLIGTWLLCVY. The Cytoplasmic segment spans residues 425 to 458; the sequence is TGYDIFQRNPLSNVVSAQPKLESDTILEPTLRQG. Residues 459–477 traverse the membrane as a helical segment; it reads CFYLLVFVPITCALLQLLS. Topologically, residues 478 to 509 are extracellular; that stretch reads WTQFSLHGKRLQMVKAQRQGLMQGRAPEIKMI.

The protein localises to the cell membrane. The polypeptide is Transmembrane protein 180 (Gallus gallus (Chicken)).